A 120-amino-acid polypeptide reads, in one-letter code: NAD(P)H-quinone oxidoreductase subunit 3, chloroplastic (120 aa).

Transmembrane regions (helical) follow at residues 10–30, 64–84, and 89–109; these read FWFF…TSKL, MFAL…PWAM, and LGVY…IGLV.

Belongs to the complex I subunit 3 family. As to quaternary structure, NDH is composed of at least 16 different subunits, 5 of which are encoded in the nucleus.

It is found in the plastid. The protein resides in the chloroplast thylakoid membrane. The enzyme catalyses a plastoquinone + NADH + (n+1) H(+)(in) = a plastoquinol + NAD(+) + n H(+)(out). It carries out the reaction a plastoquinone + NADPH + (n+1) H(+)(in) = a plastoquinol + NADP(+) + n H(+)(out). Its function is as follows. NDH shuttles electrons from NAD(P)H:plastoquinone, via FMN and iron-sulfur (Fe-S) centers, to quinones in the photosynthetic chain and possibly in a chloroplast respiratory chain. The immediate electron acceptor for the enzyme in this species is believed to be plastoquinone. Couples the redox reaction to proton translocation, and thus conserves the redox energy in a proton gradient. The protein is NAD(P)H-quinone oxidoreductase subunit 3, chloroplastic of Chaetosphaeridium globosum (Charophycean green alga).